The primary structure comprises 386 residues: Large ribosomal subunit protein uL4 (386 aa).

Positions 341-357 (VEQRRLKEKQAKLDQKR) are enriched in basic and acidic residues. Residues 341–386 (VEQRRLKEKQAKLDQKRGIATPVEGAGKGRPRKTTAKPTKAKAGKK) form a disordered region. Positions 369–386 (GRPRKTTAKPTKAKAGKK) are enriched in basic residues.

It belongs to the universal ribosomal protein uL4 family.

In Urechis caupo (Innkeeper worm), this protein is Large ribosomal subunit protein uL4 (RPL4).